Consider the following 164-residue polypeptide: Protein HIT1 (164 aa).

Positions 8, 11, 28, and 32 each coordinate Zn(2+). An HIT-type; degenerate zinc finger spans residues 8 to 49; that stretch reads CGICRGVDGKYKCPKCGVRYCSLKCYKDAAKHVHKESEQPRA.

The sequence is that of Protein HIT1 (HIT1) from Saccharomyces cerevisiae (strain ATCC 204508 / S288c) (Baker's yeast).